Here is a 165-residue protein sequence, read N- to C-terminus: Chorismate pyruvate-lyase (165 aa).

4 residues coordinate substrate: Met-35, Arg-77, Leu-115, and Glu-156.

It belongs to the UbiC family. Monomer.

It is found in the cytoplasm. It carries out the reaction chorismate = 4-hydroxybenzoate + pyruvate. It functions in the pathway cofactor biosynthesis; ubiquinone biosynthesis. Functionally, removes the pyruvyl group from chorismate, with concomitant aromatization of the ring, to provide 4-hydroxybenzoate (4HB) for the ubiquinone pathway. The sequence is that of Chorismate pyruvate-lyase from Escherichia coli O7:K1 (strain IAI39 / ExPEC).